Here is a 411-residue protein sequence, read N- to C-terminus: MDYFTAIGGVAMFTLIIMSFVAIILAARSRLVSSGDVTIHINDNPDNDVVTPAGGKLLQTLASEGIFLSSACGGGGTCAQCRCRVIEGGGSILPTEEGYFTQGEIRNHMRLACQVAVKQDMKIEIDPEFFDVQKWECEVISNDNVATFIKELVLKIPEGEEVNFRAGGYVQLEAPPHEVHYKDFDIAEEYQDDWNNFGIFKYVSKVDEPVIRAYSMANYPDEKGLIKFNIRIASPPPRGPDGIPPGKMSSWTFSLKPGDKVTVSGPYGEFFAKKTEAEMIFVGGGAGMAPMRSHIFDQLKRLNSDRKISFWYGARSIREMFYVEDYDQLEADFANFQWHVALSDPQPEDNWTGYTGFIHNVLLEEYLKGHPNPEDCEYYMCGPPMMNAAVIDMLHSLGVEDENIMLDDFGG.

A helical membrane pass occupies residues 6–26; it reads AIGGVAMFTLIIMSFVAIILA. In terms of domain architecture, 2Fe-2S ferredoxin-type spans 35–129; that stretch reads GDVTIHINDN…DMKIEIDPEF (95 aa). Residues Cys72, Cys78, Cys81, and Cys113 each coordinate [2Fe-2S] cluster. The 142-residue stretch at 132-273 folds into the FAD-binding FR-type domain; that stretch reads VQKWECEVIS…SGPYGEFFAK (142 aa).

It belongs to the NqrF family. In terms of assembly, composed of six subunits; NqrA, NqrB, NqrC, NqrD, NqrE and NqrF. [2Fe-2S] cluster serves as cofactor. The cofactor is FAD.

The protein localises to the cell inner membrane. It carries out the reaction a ubiquinone + n Na(+)(in) + NADH + H(+) = a ubiquinol + n Na(+)(out) + NAD(+). Functionally, NQR complex catalyzes the reduction of ubiquinone-1 to ubiquinol by two successive reactions, coupled with the transport of Na(+) ions from the cytoplasm to the periplasm. The first step is catalyzed by NqrF, which accepts electrons from NADH and reduces ubiquinone-1 to ubisemiquinone by a one-electron transfer pathway. The sequence is that of Na(+)-translocating NADH-quinone reductase subunit F from Psychrobacter arcticus (strain DSM 17307 / VKM B-2377 / 273-4).